The chain runs to 689 residues: Armadillo-like helical domain-containing protein 3 (689 aa).

The chain crosses the membrane as a helical span at residues 520–538; that stretch reads IFQLALQVVNLFNMFITYG.

It belongs to the ARMH3 family.

It is found in the golgi apparatus membrane. Its subcellular location is the cytoplasm. Functionally, may be involved in Golgi maintenance and protein secretion. This Danio rerio (Zebrafish) protein is Armadillo-like helical domain-containing protein 3.